The primary structure comprises 116 residues: Hydrogenase maturation factor HypA (116 aa).

Histidine 2 contacts Ni(2+). Residues cysteine 73, cysteine 76, cysteine 90, and cysteine 93 each contribute to the Zn(2+) site.

Belongs to the HypA/HybF family.

Involved in the maturation of [NiFe] hydrogenases. Required for nickel insertion into the metal center of the hydrogenase. The protein is Hydrogenase maturation factor HypA of Escherichia coli O6:H1 (strain CFT073 / ATCC 700928 / UPEC).